The sequence spans 294 residues: MSDYIASALSRDEHFRIFAADATQTVREAQRRHDTWSASSAALGRTLVATALLAASGLKNADDMLTVRIKGDGPVGALVTDGTNVGTVRGYVEEPHVNLPLNLVGKIDVARAVGKRGLLAVTKDIGVGDPFTGQVPLVSGELAEDFTYYLAKSEQIPAAVGLSVFVNADNTIQVAGGFMLQALPGANDAELSELEANVKTLPLVSELLKSGLTPEQIIQRIAGDEPVQFLDAQPLKFACNCSKEHFGDIMATLPHAQLQEMIDQDGGAETTCKFCGNQYHYSVADLEALMARHE.

Intrachain disulfides connect Cys239-Cys241 and Cys272-Cys275.

The protein belongs to the HSP33 family. Under oxidizing conditions two disulfide bonds are formed involving the reactive cysteines. Under reducing conditions zinc is bound to the reactive cysteines and the protein is inactive.

The protein localises to the cytoplasm. Its function is as follows. Redox regulated molecular chaperone. Protects both thermally unfolding and oxidatively damaged proteins from irreversible aggregation. Plays an important role in the bacterial defense system toward oxidative stress. The chain is 33 kDa chaperonin from Lacticaseibacillus casei (strain BL23) (Lactobacillus casei).